We begin with the raw amino-acid sequence, 443 residues long: Na(+)-translocating ferredoxin:NAD(+) oxidoreductase complex subunit C (443 aa).

2 consecutive 4Fe-4S ferredoxin-type domains span residues 359–391 (ESAK…IAEY) and 398–428 (DKCE…VSSI). [4Fe-4S] cluster-binding residues include Cys-369, Cys-372, Cys-375, Cys-379, Cys-408, Cys-411, Cys-414, and Cys-418.

This sequence belongs to the 4Fe4S bacterial-type ferredoxin family. RnfC subfamily. As to quaternary structure, the complex is composed of six subunits: RnfA, RnfB, RnfC, RnfD, RnfE and RnfG. Requires [4Fe-4S] cluster as cofactor.

The protein resides in the cell membrane. It carries out the reaction 2 reduced [2Fe-2S]-[ferredoxin] + Na(+)(in) + NAD(+) + H(+) = 2 oxidized [2Fe-2S]-[ferredoxin] + Na(+)(out) + NADH. Functionally, part of a membrane-bound complex that couples electron transfer with translocation of ions across the membrane. Couples electron transfer from reduced ferredoxin to NAD(+) with electrogenic movement of Na(+) out of the cell. Involved in caffeate respiration. This is Na(+)-translocating ferredoxin:NAD(+) oxidoreductase complex subunit C from Acetobacterium woodii (strain ATCC 29683 / DSM 1030 / JCM 2381 / KCTC 1655 / WB1).